Consider the following 206-residue polypeptide: Glycerol-3-phosphate acyltransferase (206 aa).

Helical transmembrane passes span 3–23, 47–67, 79–99, 119–139, and 152–172; these read LSLIFILAYLIGSFPSGVIIG, VLGPIAGTAVLFLDILKGTLA, HSLVLVVGLAAVIGHAYSIFL, PLFFVIASTIFISVILITSMV, and ILSFYTHDWLLGTIATLVLIF.

This sequence belongs to the PlsY family. Probably interacts with PlsX.

It localises to the cell membrane. It carries out the reaction an acyl phosphate + sn-glycerol 3-phosphate = a 1-acyl-sn-glycero-3-phosphate + phosphate. Its pathway is lipid metabolism; phospholipid metabolism. Catalyzes the transfer of an acyl group from acyl-phosphate (acyl-PO(4)) to glycerol-3-phosphate (G3P) to form lysophosphatidic acid (LPA). This enzyme utilizes acyl-phosphate as fatty acyl donor, but not acyl-CoA or acyl-ACP. The chain is Glycerol-3-phosphate acyltransferase from Latilactobacillus sakei subsp. sakei (strain 23K) (Lactobacillus sakei subsp. sakei).